The chain runs to 418 residues: Thyroxine-binding globulin (418 aa).

Positions M1–C20 are cleaved as a signal peptide. Residues N24, N39, N102, N168, N227, and N256 are each glycosylated (N-linked (GlcNAc...) asparagine). Positions 296 and 401 each coordinate thyroxine.

This sequence belongs to the serpin family. In terms of tissue distribution, expressed by the liver and secreted in plasma.

Its subcellular location is the secreted. Its function is as follows. Major thyroid hormone transport protein in serum. The protein is Thyroxine-binding globulin (Serpina7) of Rattus norvegicus (Rat).